A 1056-amino-acid polypeptide reads, in one-letter code: Isoleucine--tRNA ligase (1056 aa).

Residues 56–66 (PFATGLPHYGH) carry the 'HIGH' region motif. Positions 603 to 607 (KMSKS) match the 'KMSKS' region motif. Lys-606 lines the ATP pocket.

Belongs to the class-I aminoacyl-tRNA synthetase family. IleS type 2 subfamily. In terms of assembly, monomer. Zn(2+) serves as cofactor.

It is found in the cytoplasm. The enzyme catalyses tRNA(Ile) + L-isoleucine + ATP = L-isoleucyl-tRNA(Ile) + AMP + diphosphate. Functionally, catalyzes the attachment of isoleucine to tRNA(Ile). As IleRS can inadvertently accommodate and process structurally similar amino acids such as valine, to avoid such errors it has two additional distinct tRNA(Ile)-dependent editing activities. One activity is designated as 'pretransfer' editing and involves the hydrolysis of activated Val-AMP. The other activity is designated 'posttransfer' editing and involves deacylation of mischarged Val-tRNA(Ile). This Bdellovibrio bacteriovorus (strain ATCC 15356 / DSM 50701 / NCIMB 9529 / HD100) protein is Isoleucine--tRNA ligase.